The chain runs to 273 residues: Cilia- and flagella-associated protein 298-B (273 aa).

The protein belongs to the CFAP298 family.

It localises to the cytoplasm. It is found in the cytoskeleton. Its subcellular location is the cilium basal body. In terms of biological role, plays a role in motile cilium function, possibly by acting on outer dynein arm assembly. Seems to be important for initiation rather than maintenance of cilium motility. Required for correct positioning of the cilium at the apical cell surface, suggesting an additional role in the planar cell polarity (PCP) pathway. May suppress canonical Wnt signaling activity. The polypeptide is Cilia- and flagella-associated protein 298-B (cfap298-b) (Xenopus laevis (African clawed frog)).